The primary structure comprises 236 residues: MRAKSIAYVWSTATQSLTPEQCEAMIKLREPLNVVFDQGMRNVQLILKKQDHFDELMTTYETCQTAEKNFHETTFLPAKANLDTFVGSQKARKEAANHFKKIKSQSIEYTKEANQAFTAAMKYDQNHIVPAKNALQKIETCIINEVEDKLEEILNPSSITEKTLKGKTQRQKTNAALINRIKRRNTAFNNHDNNIINSFHGPSSFEQISIYYNLPIDRSFQKMVQKQLEKIKVLPN.

Its subcellular location is the plastid. It is found in the chloroplast. This is an uncharacterized protein from Chlorella vulgaris (Green alga).